A 418-amino-acid chain; its full sequence is MKAEIIAVGTEILTGQIVNTNAQFLSEKLASLGIDVYFQTAVGDNESRLLSILEIAKGRSNLIILTGGLGPTEDDLTKQTLAKFLGRELSFDPDAVEKLDRFFASRPDYARTPNNERQAQLVEGSTPLPNATGLAVGGILEVDGVTYVVLPGPPSELKPMVNNELVPLLSTGQKLYSRVLRFFGIGESQLVTILSEMIDQQSDPTIAPYAKTGEVTLRLSTKALSQAEADAKFEAVEKEILSHKTFEDQSLSEIFYGYGDDNSLAQVAFDLLKSQGKTISAAESLTAGLFQATLADFAGASAIFSGGFVTYSMEEKSRMLDIPLGDLEEHGVVSAFTAGKMAEQARKLTESDLAVSLTGVAGPDSLEDHPAGTVFIGLASAAGTETIKVNIAGRSRRDVRKIAVLHAFNLVRSTLLNS.

It belongs to the CinA family.

The chain is Putative competence-damage inducible protein from Streptococcus gordonii (strain Challis / ATCC 35105 / BCRC 15272 / CH1 / DL1 / V288).